The primary structure comprises 195 residues: ATP-dependent Clp protease proteolytic subunit (195 aa).

Ser102 functions as the Nucleophile in the catalytic mechanism. His125 is an active-site residue.

Belongs to the peptidase S14 family. Component of the chloroplastic Clp protease core complex.

Its subcellular location is the plastid. It localises to the chloroplast stroma. It catalyses the reaction Hydrolysis of proteins to small peptides in the presence of ATP and magnesium. alpha-casein is the usual test substrate. In the absence of ATP, only oligopeptides shorter than five residues are hydrolyzed (such as succinyl-Leu-Tyr-|-NHMec, and Leu-Tyr-Leu-|-Tyr-Trp, in which cleavage of the -Tyr-|-Leu- and -Tyr-|-Trp bonds also occurs).. Its function is as follows. Cleaves peptides in various proteins in a process that requires ATP hydrolysis. Has a chymotrypsin-like activity. Plays a major role in the degradation of misfolded proteins. The polypeptide is ATP-dependent Clp protease proteolytic subunit (Phaseolus vulgaris (Kidney bean)).